We begin with the raw amino-acid sequence, 81 residues long: UPF0386 protein Smed_0945 (81 aa).

Belongs to the UPF0386 family.

In Sinorhizobium medicae (strain WSM419) (Ensifer medicae), this protein is UPF0386 protein Smed_0945.